The chain runs to 277 residues: Bis(5'-nucleosyl)-tetraphosphatase, symmetrical (277 aa).

It belongs to the Ap4A hydrolase family.

It catalyses the reaction P(1),P(4)-bis(5'-adenosyl) tetraphosphate + H2O = 2 ADP + 2 H(+). In terms of biological role, hydrolyzes diadenosine 5',5'''-P1,P4-tetraphosphate to yield ADP. This is Bis(5'-nucleosyl)-tetraphosphatase, symmetrical from Methylobacillus flagellatus (strain ATCC 51484 / DSM 6875 / VKM B-1610 / KT).